The primary structure comprises 371 residues: Probable palmitoyltransferase ZDHHC11B (371 aa).

2 helical membrane passes run 43 to 63 (VVTW…FIPL) and 70 to 90 (YIAY…HLIA). The region spanning 125-175 (QFCHLCKVTVNKKTKHCISCNKCVSGFDHHCKWINNCVGSRNYWFFFSTVA) is the DHHC domain. Residue cysteine 155 is the S-palmitoyl cysteine intermediate of the active site. The next 3 helical transmembrane spans lie at 177-197 (ATAG…QYLV), 216-236 (TWLL…VVII), and 239-259 (LVLL…IFHI). A disordered region spans residues 335 to 371 (DGDSKAQEADDAPSTSTLGLQQETTEPMKTDSAESED). Polar residues predominate over residues 347–359 (PSTSTLGLQQETT). The segment covering 360-371 (EPMKTDSAESED) has biased composition (basic and acidic residues).

This sequence belongs to the DHHC palmitoyltransferase family.

The protein localises to the membrane. It catalyses the reaction L-cysteinyl-[protein] + hexadecanoyl-CoA = S-hexadecanoyl-L-cysteinyl-[protein] + CoA. Probable palmitoyltransferase that could catalyze the addition of palmitate onto various protein substrates and be involved in a variety of cellular processes. May play a role in cell proliferation. In Homo sapiens (Human), this protein is Probable palmitoyltransferase ZDHHC11B.